The primary structure comprises 344 residues: S-adenosylmethionine:tRNA ribosyltransferase-isomerase (344 aa).

The protein belongs to the QueA family. As to quaternary structure, monomer.

It is found in the cytoplasm. The catalysed reaction is 7-aminomethyl-7-carbaguanosine(34) in tRNA + S-adenosyl-L-methionine = epoxyqueuosine(34) in tRNA + adenine + L-methionine + 2 H(+). It functions in the pathway tRNA modification; tRNA-queuosine biosynthesis. In terms of biological role, transfers and isomerizes the ribose moiety from AdoMet to the 7-aminomethyl group of 7-deazaguanine (preQ1-tRNA) to give epoxyqueuosine (oQ-tRNA). The chain is S-adenosylmethionine:tRNA ribosyltransferase-isomerase from Acinetobacter baylyi (strain ATCC 33305 / BD413 / ADP1).